Consider the following 344-residue polypeptide: Tryptophan--tRNA ligase (344 aa).

ATP-binding positions include 20-22 (QPS) and 28-29 (GN). Positions 21-29 (PSGALHLGN) match the 'HIGH' region motif. L-tryptophan is bound at residue D144. ATP contacts are provided by residues 156-158 (GED), V197, and 206-210 (KMSKS). The 'KMSKS' region signature appears at 206-210 (KMSKS).

This sequence belongs to the class-I aminoacyl-tRNA synthetase family. Homodimer.

The protein localises to the cytoplasm. The catalysed reaction is tRNA(Trp) + L-tryptophan + ATP = L-tryptophyl-tRNA(Trp) + AMP + diphosphate + H(+). Catalyzes the attachment of tryptophan to tRNA(Trp). This is Tryptophan--tRNA ligase from Caulobacter vibrioides (strain ATCC 19089 / CIP 103742 / CB 15) (Caulobacter crescentus).